Consider the following 229-residue polypeptide: 2-C-methyl-D-erythritol 4-phosphate cytidylyltransferase (229 aa).

The protein belongs to the IspD/TarI cytidylyltransferase family. IspD subfamily.

The catalysed reaction is 2-C-methyl-D-erythritol 4-phosphate + CTP + H(+) = 4-CDP-2-C-methyl-D-erythritol + diphosphate. It functions in the pathway isoprenoid biosynthesis; isopentenyl diphosphate biosynthesis via DXP pathway; isopentenyl diphosphate from 1-deoxy-D-xylulose 5-phosphate: step 2/6. In terms of biological role, catalyzes the formation of 4-diphosphocytidyl-2-C-methyl-D-erythritol from CTP and 2-C-methyl-D-erythritol 4-phosphate (MEP). The sequence is that of 2-C-methyl-D-erythritol 4-phosphate cytidylyltransferase from Clostridium botulinum (strain Langeland / NCTC 10281 / Type F).